The sequence spans 137 residues: Small ribosomal subunit protein uS11 (137 aa).

The tract at residues 1–25 (MADRRRGAARGGAARPRRRERKNIP) is disordered. Residues 15–25 (RPRRRERKNIP) are compositionally biased toward basic residues.

It belongs to the universal ribosomal protein uS11 family. As to quaternary structure, part of the 30S ribosomal subunit. Interacts with proteins S7 and S18. Binds to IF-3.

In terms of biological role, located on the platform of the 30S subunit, it bridges several disparate RNA helices of the 16S rRNA. Forms part of the Shine-Dalgarno cleft in the 70S ribosome. In Thermomicrobium roseum (strain ATCC 27502 / DSM 5159 / P-2), this protein is Small ribosomal subunit protein uS11.